Consider the following 307-residue polypeptide: 4-hydroxy-3-methylbut-2-enyl diphosphate reductase (307 aa).

[4Fe-4S] cluster is bound at residue cysteine 12. (2E)-4-hydroxy-3-methylbut-2-enyl diphosphate is bound by residues histidine 41 and histidine 74. Residues histidine 41 and histidine 74 each contribute to the dimethylallyl diphosphate site. Isopentenyl diphosphate is bound by residues histidine 41 and histidine 74. Residue cysteine 96 participates in [4Fe-4S] cluster binding. A (2E)-4-hydroxy-3-methylbut-2-enyl diphosphate-binding site is contributed by histidine 124. Histidine 124 contacts dimethylallyl diphosphate. Histidine 124 serves as a coordination point for isopentenyl diphosphate. Residue glutamate 126 is the Proton donor of the active site. Threonine 165 is a binding site for (2E)-4-hydroxy-3-methylbut-2-enyl diphosphate. Position 195 (cysteine 195) interacts with [4Fe-4S] cluster. (2E)-4-hydroxy-3-methylbut-2-enyl diphosphate-binding residues include serine 223, serine 224, asparagine 225, and serine 267. Dimethylallyl diphosphate contacts are provided by serine 223, serine 224, asparagine 225, and serine 267. Residues serine 223, serine 224, asparagine 225, and serine 267 each coordinate isopentenyl diphosphate.

The protein belongs to the IspH family. Requires [4Fe-4S] cluster as cofactor.

The enzyme catalyses isopentenyl diphosphate + 2 oxidized [2Fe-2S]-[ferredoxin] + H2O = (2E)-4-hydroxy-3-methylbut-2-enyl diphosphate + 2 reduced [2Fe-2S]-[ferredoxin] + 2 H(+). It carries out the reaction dimethylallyl diphosphate + 2 oxidized [2Fe-2S]-[ferredoxin] + H2O = (2E)-4-hydroxy-3-methylbut-2-enyl diphosphate + 2 reduced [2Fe-2S]-[ferredoxin] + 2 H(+). It functions in the pathway isoprenoid biosynthesis; dimethylallyl diphosphate biosynthesis; dimethylallyl diphosphate from (2E)-4-hydroxy-3-methylbutenyl diphosphate: step 1/1. The protein operates within isoprenoid biosynthesis; isopentenyl diphosphate biosynthesis via DXP pathway; isopentenyl diphosphate from 1-deoxy-D-xylulose 5-phosphate: step 6/6. Functionally, catalyzes the conversion of 1-hydroxy-2-methyl-2-(E)-butenyl 4-diphosphate (HMBPP) into a mixture of isopentenyl diphosphate (IPP) and dimethylallyl diphosphate (DMAPP). Acts in the terminal step of the DOXP/MEP pathway for isoprenoid precursor biosynthesis. This is 4-hydroxy-3-methylbut-2-enyl diphosphate reductase from Magnetococcus marinus (strain ATCC BAA-1437 / JCM 17883 / MC-1).